Reading from the N-terminus, the 506-residue chain is ATP synthase subunit alpha (506 aa).

A compositionally biased stretch (basic and acidic residues) spans 119–129 (GPIEYEGKRPI). Positions 119 to 138 (GPIEYEGKRPIESPAPPIVR) are disordered. An ATP-binding site is contributed by 169–176 (GDRQTGKT).

It belongs to the ATPase alpha/beta chains family. In terms of assembly, F-type ATPases have 2 components, CF(1) - the catalytic core - and CF(0) - the membrane proton channel. CF(1) has five subunits: alpha(3), beta(3), gamma(1), delta(1), epsilon(1). CF(0) has three main subunits: a(1), b(2) and c(9-12). The alpha and beta chains form an alternating ring which encloses part of the gamma chain. CF(1) is attached to CF(0) by a central stalk formed by the gamma and epsilon chains, while a peripheral stalk is formed by the delta and b chains.

It is found in the cell membrane. It carries out the reaction ATP + H2O + 4 H(+)(in) = ADP + phosphate + 5 H(+)(out). Its function is as follows. Produces ATP from ADP in the presence of a proton gradient across the membrane. The alpha chain is a regulatory subunit. This Caldanaerobacter subterraneus subsp. tengcongensis (strain DSM 15242 / JCM 11007 / NBRC 100824 / MB4) (Thermoanaerobacter tengcongensis) protein is ATP synthase subunit alpha.